The following is a 280-amino-acid chain: Phosphatidylglycerol--prolipoprotein diacylglyceryl transferase (280 aa).

4 helical membrane-spanning segments follow: residues 26 to 46, 71 to 91, 106 to 126, and 132 to 152; these read LAIHWYGIAYVAGIMLGWFYA, FILWAAGGIVLGGRIGYILFY, IWNGGMSFHGGLIGTTIAMIL, and GIPVWSMFDIIAAVAPIGLLF. Arginine 154 contributes to the a 1,2-diacyl-sn-glycero-3-phospho-(1'-sn-glycerol) binding site. 3 helical membrane-spanning segments follow: residues 193–213, 217–237, and 251–271; these read GLEGLVLVVLLAIAIYVFKAL, GTVTGIFVCGYALSRIFVEFF, and WLTMGMVLSTPMFLLGLWAVL.

The protein belongs to the Lgt family.

It localises to the cell inner membrane. The enzyme catalyses L-cysteinyl-[prolipoprotein] + a 1,2-diacyl-sn-glycero-3-phospho-(1'-sn-glycerol) = an S-1,2-diacyl-sn-glyceryl-L-cysteinyl-[prolipoprotein] + sn-glycerol 1-phosphate + H(+). It functions in the pathway protein modification; lipoprotein biosynthesis (diacylglyceryl transfer). Its function is as follows. Catalyzes the transfer of the diacylglyceryl group from phosphatidylglycerol to the sulfhydryl group of the N-terminal cysteine of a prolipoprotein, the first step in the formation of mature lipoproteins. The protein is Phosphatidylglycerol--prolipoprotein diacylglyceryl transferase of Agrobacterium fabrum (strain C58 / ATCC 33970) (Agrobacterium tumefaciens (strain C58)).